Reading from the N-terminus, the 183-residue chain is Capsid protein (183 aa).

The segment at 136-183 (NAPILSTLPETTVVRRRGRSPRRRTPSPRRRRSQSPRRRRSQSRESQC) is disordered. Over residues 149–176 (VRRRGRSPRRRTPSPRRRRSQSPRRRRS) the composition is skewed to basic residues. Residues Ser-155, Ser-162, and Ser-170 each carry the phosphoserine; by host modification. The stretch at 155-161 (SPRRRTP) is one 1; half-length repeat. A 3 X 8 AA repeats of S-P-R-R-R-[PR]-S-Q region spans residues 155 to 177 (SPRRRTPSPRRRRSQSPRRRRSQ). The short motif at 158–175 (RRTPSPRRRRSQSPRRRR) is the Bipartite nuclear localization signal element. Tandem repeats lie at residues 162–169 (SPRRRRSQ) and 170–177 (SPRRRRSQ). An RNA binding region spans residues 177–183 (QSRESQC).

The protein belongs to the orthohepadnavirus core antigen family. Homodimerizes, then multimerizes. Interacts with cytosol exposed regions of viral L glycoprotein present in the reticulum-to-Golgi compartment. Interacts with human FLNB. Phosphorylated form interacts with host importin alpha; this interaction depends on the exposure of the NLS, which itself depends upon genome maturation and/or phosphorylation of the capsid protein. Interacts with host NUP153. In terms of processing, phosphorylated by host SRPK1, SRPK2, and maybe protein kinase C or GAPDH. Phosphorylation is critical for pregenomic RNA packaging. Protein kinase C phosphorylation is stimulated by HBx protein and may play a role in transport of the viral genome to the nucleus at the late step during the viral replication cycle.

The protein localises to the virion. It is found in the host cytoplasm. In terms of biological role, self assembles to form an icosahedral capsid. Most capsids appear to be large particles with an icosahedral symmetry of T=4 and consist of 240 copies of capsid protein, though a fraction forms smaller T=3 particles consisting of 180 capsid proteins. Entering capsids are transported along microtubules to the nucleus. Phosphorylation of the capsid is thought to induce exposure of nuclear localization signal in the C-terminal portion of the capsid protein that allows binding to the nuclear pore complex via the importin (karyopherin-) alpha and beta. Capsids are imported in intact form through the nuclear pore into the nuclear basket, where it probably binds NUP153. Only capsids that contain the mature viral genome can release the viral DNA and capsid protein into the nucleoplasm. Immature capsids get stuck in the basket. Capsids encapsulate the pre-genomic RNA and the P protein. Pre-genomic RNA is reverse-transcribed into DNA while the capsid is still in the cytoplasm. The capsid can then either be directed to the nucleus, providing more genomes for transcription, or bud through the endoplasmic reticulum to provide new virions. The polypeptide is Capsid protein (Homo sapiens (Human)).